The chain runs to 206 residues: Thiamine-phosphate synthase (206 aa).

4-amino-2-methyl-5-(diphosphooxymethyl)pyrimidine-binding positions include 33–37 (QMRFK) and asparagine 65. Aspartate 66 and aspartate 85 together coordinate Mg(2+). Threonine 104 is a binding site for 4-amino-2-methyl-5-(diphosphooxymethyl)pyrimidine. Residue 130–132 (TAT) coordinates 2-[(2R,5Z)-2-carboxy-4-methylthiazol-5(2H)-ylidene]ethyl phosphate. Lysine 133 provides a ligand contact to 4-amino-2-methyl-5-(diphosphooxymethyl)pyrimidine. Glycine 166 provides a ligand contact to 2-[(2R,5Z)-2-carboxy-4-methylthiazol-5(2H)-ylidene]ethyl phosphate.

This sequence belongs to the thiamine-phosphate synthase family. The cofactor is Mg(2+).

The enzyme catalyses 2-[(2R,5Z)-2-carboxy-4-methylthiazol-5(2H)-ylidene]ethyl phosphate + 4-amino-2-methyl-5-(diphosphooxymethyl)pyrimidine + 2 H(+) = thiamine phosphate + CO2 + diphosphate. It carries out the reaction 2-(2-carboxy-4-methylthiazol-5-yl)ethyl phosphate + 4-amino-2-methyl-5-(diphosphooxymethyl)pyrimidine + 2 H(+) = thiamine phosphate + CO2 + diphosphate. The catalysed reaction is 4-methyl-5-(2-phosphooxyethyl)-thiazole + 4-amino-2-methyl-5-(diphosphooxymethyl)pyrimidine + H(+) = thiamine phosphate + diphosphate. Its pathway is cofactor biosynthesis; thiamine diphosphate biosynthesis; thiamine phosphate from 4-amino-2-methyl-5-diphosphomethylpyrimidine and 4-methyl-5-(2-phosphoethyl)-thiazole: step 1/1. In terms of biological role, condenses 4-methyl-5-(beta-hydroxyethyl)thiazole monophosphate (THZ-P) and 2-methyl-4-amino-5-hydroxymethyl pyrimidine pyrophosphate (HMP-PP) to form thiamine monophosphate (TMP). The polypeptide is Thiamine-phosphate synthase (Flavobacterium psychrophilum (strain ATCC 49511 / DSM 21280 / CIP 103535 / JIP02/86)).